Reading from the N-terminus, the 345-residue chain is S-adenosylmethionine:tRNA ribosyltransferase-isomerase (345 aa).

It belongs to the QueA family. Monomer.

It localises to the cytoplasm. It catalyses the reaction 7-aminomethyl-7-carbaguanosine(34) in tRNA + S-adenosyl-L-methionine = epoxyqueuosine(34) in tRNA + adenine + L-methionine + 2 H(+). Its pathway is tRNA modification; tRNA-queuosine biosynthesis. Functionally, transfers and isomerizes the ribose moiety from AdoMet to the 7-aminomethyl group of 7-deazaguanine (preQ1-tRNA) to give epoxyqueuosine (oQ-tRNA). The protein is S-adenosylmethionine:tRNA ribosyltransferase-isomerase of Anaeromyxobacter dehalogenans (strain 2CP-1 / ATCC BAA-258).